Consider the following 143-residue polypeptide: Hemoglobin-1 (143 aa).

Position 2 is an N-acetylserine (S2). Residues S2–M143 form the Globin domain. Residue H97 coordinates heme b.

It belongs to the globin family. As to quaternary structure, monomer.

It localises to the cytoplasm. Functionally, serves to transport hydrogen sulfide to autotrophic bacteria. This is Hemoglobin-1 from Phacoides pectinatus (Thick lucine).